A 208-amino-acid chain; its full sequence is MDKFTELTAIAAPMPTENIDTDQIIPARFLKTIQRTGLGKNAFAAQRYDADGNEKPDFVLNQEPYRHAEILITYDNLGCGSSREHAPWALLDFGIRCVIAPSFADIFFNNCFKNGILPIRLPREICDELMDDARQGANSRLTVDLERQVIVRPNGEGIPFDVDPFRRHMLLEGLDDIGQTMAHDAEITSFEHRPSRAWVPSITIGTVK.

Belongs to the LeuD family. LeuD type 1 subfamily. As to quaternary structure, heterodimer of LeuC and LeuD.

The enzyme catalyses (2R,3S)-3-isopropylmalate = (2S)-2-isopropylmalate. It participates in amino-acid biosynthesis; L-leucine biosynthesis; L-leucine from 3-methyl-2-oxobutanoate: step 2/4. Functionally, catalyzes the isomerization between 2-isopropylmalate and 3-isopropylmalate, via the formation of 2-isopropylmaleate. This Gluconobacter oxydans (strain 621H) (Gluconobacter suboxydans) protein is 3-isopropylmalate dehydratase small subunit.